The following is a 688-amino-acid chain: MATEIDLLRDQNVKLNDILRQHQIEHIFRDPAMQNSMSKGGRGDTLTNSVNDQSALPPLIAEYEKHLEELNRQLTYYQKHMGEMKLQLETVITENERLHSKLKDAVEKQLEALPFGTGIGNDICADDETVRNLQEQLQIANQEKNWAVQLWQTASQELESVQKLYQEHMTEAQIHVFENRKQKDQLNNFQQLTKKLHVANENIEMTNHHFLKTVTEQNMEIEKLRKQLRQAKLDLRVAVTKVEELTKVTEGLQEQMLKKEEDIMSAQGKEEASDRRVQQLQSSIKQLESRLCIAIQEANVLKTGKTQLEKQIKELQAKCSESENEKYEAISRARDSMQLLEEANIKQNQILLEEKQKEVEREKMKKTISHLIQDAAIKARKEVESTKKQYEVLILQLKEELSALQMDCDEKQGQIDRAIRGKRAVEEELEKIYREGKQDEGDYRKLEEMHQRCLAAERSKDDLQLRLKTAENRIKQLEINSSEEISRSHEMIQKLQTVLESERENCGFVSEQRLKLQQENEQLQKETEDLRKVALEAQKKAKLKVSTMEHQFSIKEHGFEVQLREMEDSNRNSIVELRHLLAAQQKTANRWKEETKKLTESAEMRISSLKSELSRQKLHTQELLSQLEMANEKVAENEKLILEHQEKANRLQRRLSQAEERAASASQQLSVITVQRRKAASMMNLENI.

Alanine 2 is subject to N-acetylalanine. The stretch at 59–673 (LIAEYEKHLE…SASQQLSVIT (615 aa)) forms a coiled coil. The residue at position 681 (serine 681) is a Phosphoserine.

In terms of assembly, interacts with SCN10A and clathrin. Identified in a complex containing SCN10A, clathrin and SCLT1. As to expression, detected in small neurons in dorsal root ganglia. Detected in C-type fibers of sciatic nerve (at protein level).

The protein resides in the cytoplasm. The protein localises to the cytoskeleton. It is found in the microtubule organizing center. It localises to the centrosome. Its subcellular location is the centriole. Its function is as follows. Adapter protein that links SCN10A to clathrin. Regulates SCN10A channel activity, possibly by promoting channel internalization. This chain is Sodium channel and clathrin linker 1 (Sclt1), found in Rattus norvegicus (Rat).